The primary structure comprises 561 residues: Glucose-6-phosphate isomerase (561 aa).

The active-site Proton donor is the glutamate 366. Residues histidine 397 and lysine 525 contribute to the active site.

Belongs to the GPI family.

It is found in the cytoplasm. The catalysed reaction is alpha-D-glucose 6-phosphate = beta-D-fructose 6-phosphate. It participates in carbohydrate degradation; glycolysis; D-glyceraldehyde 3-phosphate and glycerone phosphate from D-glucose: step 2/4. This is Glucose-6-phosphate isomerase (gpi) from Dictyostelium discoideum (Social amoeba).